Here is a 397-residue protein sequence, read N- to C-terminus: Succinate--CoA ligase [ADP-forming] subunit beta (397 aa).

The ATP-grasp domain maps to Lys-9–Ala-254. Residues Lys-46, Gly-53–Gly-55, Glu-109, Ser-112, and Glu-117 contribute to the ATP site. Mg(2+) is bound by residues Asn-209 and Asp-223. Substrate is bound by residues Asn-274 and Gly-331–Met-333.

It belongs to the succinate/malate CoA ligase beta subunit family. Heterotetramer of two alpha and two beta subunits. Mg(2+) is required as a cofactor.

It catalyses the reaction succinate + ATP + CoA = succinyl-CoA + ADP + phosphate. The enzyme catalyses GTP + succinate + CoA = succinyl-CoA + GDP + phosphate. It participates in carbohydrate metabolism; tricarboxylic acid cycle; succinate from succinyl-CoA (ligase route): step 1/1. Its function is as follows. Succinyl-CoA synthetase functions in the citric acid cycle (TCA), coupling the hydrolysis of succinyl-CoA to the synthesis of either ATP or GTP and thus represents the only step of substrate-level phosphorylation in the TCA. The beta subunit provides nucleotide specificity of the enzyme and binds the substrate succinate, while the binding sites for coenzyme A and phosphate are found in the alpha subunit. In Cereibacter sphaeroides (strain ATCC 17029 / ATH 2.4.9) (Rhodobacter sphaeroides), this protein is Succinate--CoA ligase [ADP-forming] subunit beta.